The primary structure comprises 335 residues: 1D-myo-inositol 2-acetamido-2-deoxy-alpha-D-glucopyranoside deacetylase (335 aa).

The Zn(2+) site is built by histidine 19, aspartate 22, and histidine 158.

It belongs to the MshB deacetylase family. Requires Zn(2+) as cofactor.

It catalyses the reaction 1D-myo-inositol 2-acetamido-2-deoxy-alpha-D-glucopyranoside + H2O = 1D-myo-inositol 2-amino-2-deoxy-alpha-D-glucopyranoside + acetate. In terms of biological role, catalyzes the deacetylation of 1D-myo-inositol 2-acetamido-2-deoxy-alpha-D-glucopyranoside (GlcNAc-Ins) in the mycothiol biosynthesis pathway. This chain is 1D-myo-inositol 2-acetamido-2-deoxy-alpha-D-glucopyranoside deacetylase, found in Corynebacterium urealyticum (strain ATCC 43042 / DSM 7109).